A 345-amino-acid polypeptide reads, in one-letter code: MNYDDDCLYEDKHMDTDIYDMLADEDTSDVDNTLAVCATARAGIEKAGFSVLETFTPGAEGFTFACIENKTRENVVIKAGQRGGTVTEAHILRNINHPVIIRLMGTFTYNSFTCLVLPRYKTDLYCYLSDRRRIAICDMLSIERSVLRAIQYLHENRIIHRDVKAENIFINHPGDVCLGDFGAACYPVDITQNKYYGWAGTIATNAPELLARDPYGPAVDIWSAGIVLFEMATCHDSLFEKDGLDGDCDSDRQIKLIIRRTGVHPSEFPIDAQATLDEIYRTCQKTSRKPGTRPTWTNLYELPLELEYLICKMLAFDAHKRPSAKALLDFAAFYDIPDPYPNPTN.

A Protein kinase domain is found at 49-334; sequence FSVLETFTPG…KALLDFAAFY (286 aa). Residues 55 to 63 and K78 contribute to the ATP site; that span reads FTPGAEGFT. D162 serves as the catalytic Proton acceptor.

This sequence belongs to the protein kinase superfamily. Ser/Thr protein kinase family. In terms of processing, phosphorylated by UL13 homolog; this phosphorylation regulates subsequent phosphorylation of UL31 and UL34 homologs by US3. Autophosphorylated.

The protein localises to the host cytoplasm. It is found in the host nucleus. The catalysed reaction is L-seryl-[protein] + ATP = O-phospho-L-seryl-[protein] + ADP + H(+). The enzyme catalyses L-threonyl-[protein] + ATP = O-phospho-L-threonyl-[protein] + ADP + H(+). In terms of biological role, multifunctional serine/threonine kinase that plays a role in several processes including egress of virus particles from the nucleus, modulation of the actin cytoskeleton and inhibition of apoptosis. Phosphorylates UL31 and UL34 homologs, two critical regulators of capsid budding from nucleus to endoplasmic reticulum, thereby facilitating virion egress. Modulates and redistributes host components of the nuclear envelope, including LMNA, emerin/EMD and the nuclear matrix protein MATR3. Phosphorylates envelope glycoprotein B (gB), probably to direct it to the cell surface. Promotes virus intracellular spread by restructuring host cell cytoskeleton. Blocks host apoptosis to extend cell survival and allow efficient viral replication. Promotes viral gene expression by phosphorylating host HDAC2 to reduce viral genome silencing. The polypeptide is Serine/threonine-protein kinase US3 homolog (US2) (Chlorocebus aethiops (Green monkey)).